A 226-amino-acid polypeptide reads, in one-letter code: Uracil-DNA glycosylase (226 aa).

Asp64 functions as the Proton acceptor in the catalytic mechanism.

This sequence belongs to the uracil-DNA glycosylase (UDG) superfamily. UNG family.

It is found in the cytoplasm. The enzyme catalyses Hydrolyzes single-stranded DNA or mismatched double-stranded DNA and polynucleotides, releasing free uracil.. Its function is as follows. Excises uracil residues from the DNA which can arise as a result of misincorporation of dUMP residues by DNA polymerase or due to deamination of cytosine. This is Uracil-DNA glycosylase from Photorhabdus laumondii subsp. laumondii (strain DSM 15139 / CIP 105565 / TT01) (Photorhabdus luminescens subsp. laumondii).